Here is an 898-residue protein sequence, read N- to C-terminus: Transportin-1 (898 aa).

20 HEAT repeats span residues glycine 19–glutamate 46, tyrosine 51–glutamine 89, phenylalanine 98–leucine 131, leucine 137–aspartate 174, asparagine 181–isoleucine 211, phenylalanine 224–leucine 251, histidine 263–threonine 290, proline 306–valine 397, histidine 405–alanine 433, proline 445–arginine 472, leucine 486–alanine 519, leucine 527–valine 560, glutamate 568–glutamine 606, glutamate 614–glycine 665, isoleucine 676–phenylalanine 707, alanine 715–glycine 748, proline 756–proline 791, glutamine 799–asparagine 832, isoleucine 841–valine 872, and glutamate 875–phenylalanine 895. In terms of domain architecture, Importin N-terminal spans valine 41–aspartate 109. Positions phenylalanine 347–aspartate 374 are disordered. Over residues aspartate 360–aspartate 374 the composition is skewed to acidic residues.

This sequence belongs to the importin beta family. Importin beta-2 subfamily. Identified in a complex that contains TNPO1, RAN and RANBP1. Binds HNRPA1, HNRPA2, HNRNPDL, RPS7, RPL5 and RAN. Interacts with H2A, H2B, H3 and H4 histones. Interacts with isoform 1 and isoform 5 of ADAR/ADAR1 (via DRBM 3 domain). Interacts with SNAI1 (via zinc fingers); the interaction mediates SNAI1 nuclear import. Interacts with SNAI2 (via zinc fingers). Interacts with RPL23A (via BIB domain) and SRP19; this interaction is involved in RPL23A and SRP19 import into the nucleus. Interacts (via HEAT repeats 8-12) with BAP1 (via non-classical PY-NLS); this interaction is direct, is involved in BAP1 nuclear import and disrupts BAP1 homodimerization.

The protein localises to the cytoplasm. Its subcellular location is the nucleus. Functionally, functions in nuclear protein import as nuclear transport receptor. Serves as receptor for nuclear localization signals (NLS) in cargo substrates. May mediate docking of the importin/substrate complex to the nuclear pore complex (NPC) through binding to nucleoporin and the complex is subsequently translocated through the pore by an energy requiring, Ran-dependent mechanism. At the nucleoplasmic side of the NPC, Ran binds to the importin, the importin/substrate complex dissociates and importin is re-exported from the nucleus to the cytoplasm where GTP hydrolysis releases Ran. The directionality of nuclear import is thought to be conferred by an asymmetric distribution of the GTP- and GDP-bound forms of Ran between the cytoplasm and nucleus. Involved in nuclear import of M9-containing proteins. In vitro, binds directly to the M9 region of the heterogeneous nuclear ribonucleoproteins (hnRNP), A1 and A2 and mediates their nuclear import. Involved in hnRNP A1/A2 nuclear export. Mediates the nuclear import of ribosomal proteins RPL23A, RPS7 and RPL5. In vitro, mediates nuclear import of SRP19. Mediates the import of histones H2A, H2B, H3 and H4. Mediates nuclear import of ADAR/ADAR1 in a RanGTP-dependent manner. Main mediator of PR-DUB complex component BAP1 nuclear import; acts redundantly with the karyopherins KPNA1 and KPNA2. The polypeptide is Transportin-1 (Tnpo1) (Mus musculus (Mouse)).